Reading from the N-terminus, the 401-residue chain is Probable [pyruvate dehydrogenase (acetyl-transferring)] kinase, mitochondrial (401 aa).

The 230-residue stretch at 131–360 (LIELRESDGV…DACIYLKAVP (230 aa)) folds into the Histidine kinase domain. Residues 247–254 (ELFKNAMR), aspartate 286, 305–306 (ST), and 321–326 (GYGYGL) contribute to the ATP site.

It belongs to the PDK/BCKDK protein kinase family.

The protein localises to the mitochondrion matrix. The enzyme catalyses L-seryl-[pyruvate dehydrogenase E1 alpha subunit] + ATP = O-phospho-L-seryl-[pyruvate dehydrogenase E1 alpha subunit] + ADP + H(+). In terms of biological role, inhibits the mitochondrial pyruvate dehydrogenase complex by phosphorylation of the E1 alpha subunit, thus contributing to the regulation of glucose metabolism. Required for normal lifespan. The sequence is that of Probable [pyruvate dehydrogenase (acetyl-transferring)] kinase, mitochondrial (pdhk-2) from Caenorhabditis elegans.